A 387-amino-acid chain; its full sequence is F420-dependent formate dehydrogenase 1 subunit beta (387 aa).

4Fe-4S ferredoxin-type domains follow at residues T275–V298 and V326–F355. [4Fe-4S] cluster is bound by residues C286, C289, C292, C296, C335, C338, C341, and C345. Residues L366–Q387 form a disordered region.

Belongs to the FrhB family. Dimer of an alpha (FdhA1) and a beta (FdhB1) subunit. Requires [4Fe-4S] cluster as cofactor. The cofactor is FAD. It depends on Zn(2+) as a cofactor.

The enzyme catalyses oxidized coenzyme F420-(gamma-L-Glu)(n) + formate + 2 H(+) = reduced coenzyme F420-(gamma-L-Glu)(n) + CO2. Catalyzes the oxidation of formate to carbon dioxide, with coenzyme F420 as the electron acceptor. In vitro can also use methyl viologen as electron acceptor. This is F420-dependent formate dehydrogenase 1 subunit beta from Methanococcus maripaludis (strain DSM 14266 / JCM 13030 / NBRC 101832 / S2 / LL).